We begin with the raw amino-acid sequence, 722 residues long: Polyribonucleotide nucleotidyltransferase (722 aa).

Positions 486 and 492 each coordinate Mg(2+). The KH domain maps to 553–612 (PRITTIQIRPEFIKNVIGPGGKVIKDIIARTGAAINIEDSGRVDIASANGEAVKAAIAMI). The 69-residue stretch at 622-690 (GKIYTGTVRK…KTGKIRLSRK (69 aa)) folds into the S1 motif domain. A disordered region spans residues 696-722 (RAAQQGAAAGEAAAQPAPAPTQPDAKA).

It belongs to the polyribonucleotide nucleotidyltransferase family. Requires Mg(2+) as cofactor.

It localises to the cytoplasm. The enzyme catalyses RNA(n+1) + phosphate = RNA(n) + a ribonucleoside 5'-diphosphate. Its function is as follows. Involved in mRNA degradation. Catalyzes the phosphorolysis of single-stranded polyribonucleotides processively in the 3'- to 5'-direction. The sequence is that of Polyribonucleotide nucleotidyltransferase from Myxococcus xanthus (strain DK1622).